The primary structure comprises 231 residues: Phosphatidylserine decarboxylase proenzyme (231 aa).

Serine 189 functions as the Schiff-base intermediate with substrate; via pyruvic acid in the catalytic mechanism. Pyruvic acid (Ser); by autocatalysis is present on serine 189.

It belongs to the phosphatidylserine decarboxylase family. PSD-A subfamily. As to quaternary structure, heterodimer of a large membrane-associated beta subunit and a small pyruvoyl-containing alpha subunit. Requires pyruvate as cofactor. Is synthesized initially as an inactive proenzyme. Formation of the active enzyme involves a self-maturation process in which the active site pyruvoyl group is generated from an internal serine residue via an autocatalytic post-translational modification. Two non-identical subunits are generated from the proenzyme in this reaction, and the pyruvate is formed at the N-terminus of the alpha chain, which is derived from the carboxyl end of the proenzyme. The post-translation cleavage follows an unusual pathway, termed non-hydrolytic serinolysis, in which the side chain hydroxyl group of the serine supplies its oxygen atom to form the C-terminus of the beta chain, while the remainder of the serine residue undergoes an oxidative deamination to produce ammonia and the pyruvoyl prosthetic group on the alpha chain.

The protein resides in the cell membrane. It catalyses the reaction a 1,2-diacyl-sn-glycero-3-phospho-L-serine + H(+) = a 1,2-diacyl-sn-glycero-3-phosphoethanolamine + CO2. The protein operates within phospholipid metabolism; phosphatidylethanolamine biosynthesis; phosphatidylethanolamine from CDP-diacylglycerol: step 2/2. Functionally, catalyzes the formation of phosphatidylethanolamine (PtdEtn) from phosphatidylserine (PtdSer). The sequence is that of Phosphatidylserine decarboxylase proenzyme from Chelativorans sp. (strain BNC1).